A 207-amino-acid polypeptide reads, in one-letter code: Ribosomal RNA small subunit methyltransferase G (207 aa).

S-adenosyl-L-methionine is bound by residues Gly71, Phe76, 122–123 (AE), and Arg135.

It belongs to the methyltransferase superfamily. RNA methyltransferase RsmG family.

It localises to the cytoplasm. Specifically methylates the N7 position of a guanine in 16S rRNA. This chain is Ribosomal RNA small subunit methyltransferase G, found in Cytophaga hutchinsonii (strain ATCC 33406 / DSM 1761 / CIP 103989 / NBRC 15051 / NCIMB 9469 / D465).